Here is a 151-residue protein sequence, read N- to C-terminus: MAKVQFTKRQETSQFFVHCSATKANMDVGVREIRQWHKEQGWLDVGYHFIIRRDGTVEAGRDQDAVGSHVKGYNSTSVGVCLVGGIDAKGNPEANFTPQQMSALNGVLHELRGTYPKAVIMAHHDVAPKACPSFDLQRWVKTGELVTSDRG.

H18, H123, and C131 together coordinate Zn(2+).

This sequence belongs to the N-acetylmuramoyl-L-alanine amidase 2 family. As to quaternary structure, interacts with the viral RNA polymerase. Zn(2+) serves as cofactor.

It is found in the host cytoplasm. It carries out the reaction Hydrolyzes the link between N-acetylmuramoyl residues and L-amino acid residues in certain cell-wall glycopeptides.. With respect to regulation, binding to the viral RNA polymerase inhibits amidase activity. Endolysin with amidase activity that degrades host peptidoglycans and participates with the holin and spanin proteins in the sequential events which lead to the programmed host cell lysis releasing the mature viral particles. Once the holin has permeabilized the host cell membrane, the endolysin can reach the periplasm and breaking down the peptidoglycan layer. Its function is as follows. Plays an important role in the switch between viral transcription and genome replication. Once produced in sufficient amount, interacts with and inhibits the viral RNA polymerase that becomes unable to produce additional late transcripts. This lysozyme-polymerase complex in turn plays an active role in viral genome replication and packaging. In Enterobacteria phage K11 (Bacteriophage K11), this protein is Endolysin.